The chain runs to 296 residues: Chelated iron transport system membrane protein YfeB (296 aa).

One can recognise an ABC transporter domain in the interval 11–246 (LVVDNVTVTY…NLEMTFGGVL (236 aa)). 44–51 (GVNGSGKS) lines the ATP pocket. The tract at residues 276–296 (VFYGHTKNDPPAQSQSKEQNS) is disordered. Residues 286-296 (PAQSQSKEQNS) are compositionally biased toward polar residues.

It belongs to the ABC transporter superfamily.

The protein localises to the cell inner membrane. Functionally, part of an ATP-driven transport system YfeABCD for chelated iron. In Yersinia pestis, this protein is Chelated iron transport system membrane protein YfeB (yfeB).